Here is a 1865-residue protein sequence, read N- to C-terminus: Transient receptor potential cation channel subfamily M member 7 (1865 aa).

Position 1 is an N-acetylmethionine (methionine 1). Residues 1 to 850 (MSQKSWIEST…ITRKFYAFYH (850 aa)) lie on the Cytoplasmic side of the membrane. Serine 101 is modified (phosphoserine). The span at 544-555 (NRRSGRNTSSST) shows a compositional bias: low complexity. Residues 544-575 (NRRSGRNTSSSTPQLRKSHESFGNRADKKEKM) form a disordered region. Basic and acidic residues predominate over residues 560–573 (KSHESFGNRADKKE). Residues 851-876 (APIVKFWFNTLAYLGFLMLYTFVVLV) form a helical membrane-spanning segment. The Extracellular segment spans residues 877–882 (QMEQLP). The helical transmembrane segment at 883–904 (SVQEWIVIAYIFTYAIEKVREI) threads the bilayer. Residues 905–923 (FMSEAGKVNQKIKVWFSDY) are Cytoplasmic-facing. Residues 924-943 (FNISDTIAIISFFIGFGLRF) form a helical membrane-spanning segment. The Extracellular segment spans residues 944–956 (GAKWNFANAYDNH). A helical membrane pass occupies residues 957–980 (VFVAGRLIYCLNIIFWYVRLLDFL). At 981–999 (AVNQQAGPYVMMIGKMVAN) the chain is on the cytoplasmic side. The chain crosses the membrane as a helical span at residues 1000–1023 (MFYIVVIMALVLLSFGVPRKAILY). Residues 1024-1025 (PH) are Extracellular-facing. Positions 1026–1066 (EAPSWTLAKDIVFHPYWMIFGEVYAYEIDVCANDSVIPQIC) form an intramembrane region, pore-forming. Residues 1067 to 1069 (GPG) are Extracellular-facing. A helical membrane pass occupies residues 1070 to 1098 (TWLTPFLQAVYLFVQYIIMVNLLIAFFNN). Over 1099 to 1865 (VYLQVKAISN…ESTNSVRLML (767 aa)) the chain is Cytoplasmic. Residues cysteine 1143, cysteine 1144, and cysteine 1146 are each lipidated (S-palmitoyl cysteine). Residue threonine 1163 is modified to Phosphothreonine; by autocatalysis. 2 positions are modified to phosphoserine; by autocatalysis: serine 1191 and serine 1193. The stretch at 1198–1250 (RVTFERVEQMCIQIKEVGDRVNYIKRSLQSLDSQIGHLQDLSALTVDTLKTLT) forms a coiled coil. Serine 1224 bears the Phosphoserine mark. Serine 1255 and serine 1258 each carry phosphoserine; by autocatalysis. Phosphothreonine; by autocatalysis is present on threonine 1265. Phosphoserine; by autocatalysis is present on serine 1287. Serine 1301 carries the phosphoserine modification. Serine 1358 carries the phosphoserine; by autocatalysis modification. Phosphoserine is present on residues serine 1361 and serine 1386. Low complexity predominate over residues 1386-1398 (SSSTSIPHLSSPP). The interval 1386 to 1407 (SSSTSIPHLSSPPTKFFVSTPS) is disordered. Residues serine 1387 and serine 1390 each carry the phosphoserine; by autocatalysis modification. Serine 1395 and serine 1396 each carry phosphoserine. Serine 1404 is subject to Phosphoserine; by autocatalysis. Residue threonine 1405 is modified to Phosphothreonine; by autocatalysis. At serine 1407 the chain carries Phosphoserine; by autocatalysis. Phosphothreonine; by autocatalysis is present on threonine 1435. Serine 1446 is modified (phosphoserine; by autocatalysis). The residue at position 1455 (threonine 1455) is a Phosphothreonine; by autocatalysis. 2 positions are modified to phosphoserine; by autocatalysis: serine 1456 and serine 1463. Position 1467 is a phosphothreonine (threonine 1467). Serine 1468 bears the Phosphoserine; by autocatalysis mark. Residue threonine 1471 is modified to Phosphothreonine; by autocatalysis. Phosphoserine; by autocatalysis occurs at positions 1476 and 1477. Threonine 1482 carries the post-translational modification Phosphothreonine; by autocatalysis. A disordered region spans residues 1492–1511 (HSKQAEKISRRPSTEDTHEV). The residue at position 1493 (serine 1493) is a Phosphoserine; by autocatalysis. Over residues 1494–1511 (KQAEKISRRPSTEDTHEV) the composition is skewed to basic and acidic residues. The residue at position 1500 (serine 1500) is a Phosphoserine. Position 1504 is a phosphoserine; by autocatalysis (serine 1504). Threonine 1508 carries the post-translational modification Phosphothreonine; by autocatalysis. Serine 1513, serine 1527, and serine 1533 each carry phosphoserine; by autocatalysis. The disordered stretch occupies residues 1524–1543 (DRPSNREMPSEEGTLNGLTS). A phosphothreonine; by autocatalysis mark is found at threonine 1537 and threonine 1542. A Phosphoserine; by autocatalysis modification is found at serine 1543. The residue at position 1551 (threonine 1551) is a Phosphothreonine; by autocatalysis. Phosphoserine; by autocatalysis is present on residues serine 1567 and serine 1569. Threonine 1583 bears the Phosphothreonine; by autocatalysis mark. An Alpha-type protein kinase domain is found at 1594-1824 (ILNNSMSSWS…CCRKLKLPDL (231 aa)). Residues serine 1598 and serine 1615 each carry the phosphoserine; by autocatalysis modification. Residues glycine 1621, glycine 1622, leucine 1623, arginine 1624, and lysine 1648 each coordinate ADP. The residue at position 1660 (serine 1660) is a Phosphoserine; by autocatalysis. A Phosphothreonine; by autocatalysis modification is found at threonine 1685. ADP-binding residues include glutamate 1720, glutamate 1721, and methionine 1723. Histidine 1753 contributes to the Zn(2+) binding site. Aspartate 1767 acts as the Proton acceptor in catalysis. Aspartate 1777 provides a ligand contact to ADP. Serine 1779 carries the post-translational modification Phosphoserine; by autocatalysis. Residues histidine 1810, cysteine 1812, and cysteine 1816 each coordinate Zn(2+). Threonine 1830 carries the phosphothreonine; by autocatalysis modification. The tract at residues 1836–1865 (FPQDEPSDLNLQPGNSTKESESTNSVRLML) is disordered. Polar residues predominate over residues 1844 to 1865 (LNLQPGNSTKESESTNSVRLML). Serine 1851 bears the Phosphoserine mark. Serine 1860 bears the Phosphoserine; by autocatalysis mark.

In the C-terminal section; belongs to the protein kinase superfamily. Alpha-type protein kinase family. ALPK subfamily. The protein in the N-terminal section; belongs to the transient receptor (TC 1.A.4) family. LTrpC subfamily. TRPM7 sub-subfamily. As to quaternary structure, homotetramer. Interacts with PLCB1. Forms heteromers with TRPM6; heteromeric channels are functionally different from the homomeric channels. It depends on Zn(2+) as a cofactor. Post-translationally, palmitoylated; palmitoylation at Cys-1143, Cys-1144 and Cys-1146 promotes TRPM7 trafficking from the Golgi to the surface membrane. In terms of processing, autophosphorylated; autophosphorylation of C-terminus regulates TRPM7 kinase activity towards its substrates. The C-terminal kinase domain can be cleaved from the channel segment in a cell-type-specific fashion. TRPM7 is cleaved by caspase-8, dissociating the kinase from the ion-conducting pore. The cleaved kinase fragments (M7CKs) can translocate to the cell nucleus and binds chromatin-remodeling complex proteins in a Zn(2+)-dependent manner to ultimately phosphorylate specific Ser/Thr residues of histones.

The protein resides in the cell membrane. It localises to the cytoplasmic vesicle membrane. Its subcellular location is the nucleus. It catalyses the reaction L-seryl-[protein] + ATP = O-phospho-L-seryl-[protein] + ADP + H(+). It carries out the reaction L-threonyl-[protein] + ATP = O-phospho-L-threonyl-[protein] + ADP + H(+). The catalysed reaction is Mg(2+)(in) = Mg(2+)(out). The enzyme catalyses Ca(2+)(in) = Ca(2+)(out). It catalyses the reaction Zn(2+)(in) = Zn(2+)(out). With respect to regulation, channel displays constitutive activity. Channel activity is negatively regulated by cytosolic Mg(2+) and Mg-ATP. Channel activity is negatively regulated by low intracellular pH. Resting free cytosolic Mg(2+) and Mg-ATP concentrations seem to be sufficient to block native TRPM7 channel activity. TRPM7 channel activity is highly dependent on membrane levels of phosphatidylinositol 4,5 bisphosphate (PIP2). PIP2 hydrolysis negatively regulates TRPM7 channel activity. TRPM7 kinase activity does not affect channel activity. The kinase activity is controlled through the autophosphorylation of a serine/threonine-rich region located N-terminal to the catalytic domain. In terms of biological role, bifunctional protein that combines an ion channel with an intrinsic kinase domain, enabling it to modulate cellular functions either by conducting ions through the pore or by phosphorylating downstream proteins via its kinase domain. The channel is highly permeable to divalent cations, specifically calcium (Ca2+), magnesium (Mg2+) and zinc (Zn2+) and mediates their influx. Controls a wide range of biological processes such as Ca2(+), Mg(2+) and Zn(2+) homeostasis, vesicular Zn(2+) release channel and intracellular Ca(2+) signaling, embryonic development, immune responses, cell motility, proliferation and differentiation. The C-terminal alpha-kinase domain autophosphorylates cytoplasmic residues of TRPM7. In vivo, TRPM7 phosphorylates SMAD2, suggesting that TRPM7 kinase may play a role in activating SMAD signaling pathways. In vitro, TRPM7 kinase phosphorylates ANXA1 (annexin A1), myosin II isoforms and a variety of proteins with diverse cellular functions. The cleaved channel exhibits substantially higher current and potentiates Fas receptor signaling. Its function is as follows. The C-terminal kinase domain can be cleaved from the channel segment in a cell-type-specific fashion. In immune cells, the TRPM7 kinase domain is clipped from the channel domain by caspases in response to Fas-receptor stimulation. The cleaved kinase fragments can translocate to the nucleus, and bind chromatin-remodeling complex proteins in a Zn(2+)-dependent manner to ultimately phosphorylate specific Ser/Thr residues of histones known to be functionally important for cell differentiation and embryonic development. This is Transient receptor potential cation channel subfamily M member 7 (TRPM7) from Homo sapiens (Human).